The sequence spans 567 residues: Cytochrome P450 monooxygenase 69 (567 aa).

The chain crosses the membrane as a helical span at residues 7-24 (ELAALTVVLLATGVLFYA). Asn25, Asn81, Asn223, and Asn279 each carry an N-linked (GlcNAc...) asparagine glycan. Cys475 contacts heme.

The protein belongs to the cytochrome P450 family. Requires heme as cofactor.

It is found in the membrane. Its pathway is secondary metabolite biosynthesis. Functionally, cytochrome P450 monooxygenase that is able to use 4-ethoxybenzoic acid as a substrate for oxidation. This is Cytochrome P450 monooxygenase 69 from Postia placenta (strain ATCC 44394 / Madison 698-R) (Brown rot fungus).